The primary structure comprises 239 residues: 2,3,4,5-tetrahydropyridine-2,6-dicarboxylate N-acetyltransferase (239 aa).

Belongs to the transferase hexapeptide repeat family. DapH subfamily.

It carries out the reaction (S)-2,3,4,5-tetrahydrodipicolinate + acetyl-CoA + H2O = L-2-acetamido-6-oxoheptanedioate + CoA. It participates in amino-acid biosynthesis; L-lysine biosynthesis via DAP pathway; LL-2,6-diaminopimelate from (S)-tetrahydrodipicolinate (acetylase route): step 1/3. Catalyzes the transfer of an acetyl group from acetyl-CoA to tetrahydrodipicolinate. The protein is 2,3,4,5-tetrahydropyridine-2,6-dicarboxylate N-acetyltransferase of Staphylococcus saprophyticus subsp. saprophyticus (strain ATCC 15305 / DSM 20229 / NCIMB 8711 / NCTC 7292 / S-41).